A 191-amino-acid chain; its full sequence is Acireductone dioxygenase 2 (191 aa).

Residues H102, H104, E108, and H146 each contribute to the Fe(2+) site. The Ni(2+) site is built by H102, H104, E108, and H146.

This sequence belongs to the acireductone dioxygenase (ARD) family. As to quaternary structure, monomer. It depends on Fe(2+) as a cofactor. Ni(2+) serves as cofactor.

The enzyme catalyses 1,2-dihydroxy-5-(methylsulfanyl)pent-1-en-3-one + O2 = 3-(methylsulfanyl)propanoate + CO + formate + 2 H(+). It catalyses the reaction 1,2-dihydroxy-5-(methylsulfanyl)pent-1-en-3-one + O2 = 4-methylsulfanyl-2-oxobutanoate + formate + 2 H(+). The protein operates within amino-acid biosynthesis; L-methionine biosynthesis via salvage pathway; L-methionine from S-methyl-5-thio-alpha-D-ribose 1-phosphate: step 5/6. Its function is as follows. Catalyzes 2 different reactions between oxygen and the acireductone 1,2-dihydroxy-3-keto-5-methylthiopentene (DHK-MTPene) depending upon the metal bound in the active site. Fe-containing acireductone dioxygenase (Fe-ARD) produces formate and 2-keto-4-methylthiobutyrate (KMTB), the alpha-ketoacid precursor of methionine in the methionine recycle pathway. Ni-containing acireductone dioxygenase (Ni-ARD) produces methylthiopropionate, carbon monoxide and formate, and does not lie on the methionine recycle pathway. This Nocardia farcinica (strain IFM 10152) protein is Acireductone dioxygenase 2.